The primary structure comprises 311 residues: Malate dehydrogenase (311 aa).

NAD(+) is bound by residues 7–13 (GAAGGIG) and aspartate 34. 2 residues coordinate substrate: arginine 81 and arginine 87. NAD(+) is bound by residues asparagine 94 and 117–119 (ITN). Residues asparagine 119 and arginine 153 each contribute to the substrate site. Residue histidine 177 is the Proton acceptor of the active site. NAD(+) is bound at residue methionine 227.

Belongs to the LDH/MDH superfamily. MDH type 1 family. As to quaternary structure, homodimer.

The catalysed reaction is (S)-malate + NAD(+) = oxaloacetate + NADH + H(+). Its function is as follows. Catalyzes the reversible oxidation of malate to oxaloacetate. The protein is Malate dehydrogenase of Vibrio parahaemolyticus serotype O3:K6 (strain RIMD 2210633).